Reading from the N-terminus, the 159-residue chain is MAESIQSLDQLSQLKTAAAPDAPKHEKKVDKFNRAYATGKRKDAVARVWIKPGAGKVTVNSREVEVYFARPVLRMMIEQPFSVAQRSGQYDVICTVAGGGLSGQAGAVRHGISKALTYFEPELRTVLKKGGFLTRDSRVVERKKYGKAKARRSFQFSKR.

It belongs to the universal ribosomal protein uS9 family.

In Bradyrhizobium diazoefficiens (strain JCM 10833 / BCRC 13528 / IAM 13628 / NBRC 14792 / USDA 110), this protein is Small ribosomal subunit protein uS9.